The sequence spans 296 residues: Probable endonuclease 4 (296 aa).

Residues His68, His109, Glu144, Asp178, His181, His213, Asp226, His228, and Glu258 each coordinate Zn(2+).

This sequence belongs to the AP endonuclease 2 family. Zn(2+) serves as cofactor.

It catalyses the reaction Endonucleolytic cleavage to 5'-phosphooligonucleotide end-products.. Functionally, endonuclease IV plays a role in DNA repair. It cleaves phosphodiester bonds at apurinic or apyrimidinic (AP) sites, generating a 3'-hydroxyl group and a 5'-terminal sugar phosphate. The chain is Probable endonuclease 4 from Staphylococcus aureus (strain Mu3 / ATCC 700698).